The sequence spans 381 residues: Acetylornithine deacetylase (381 aa).

His79 lines the Zn(2+) pocket. The active site involves Asp81. Asp111 provides a ligand contact to Zn(2+). The active site involves Glu143. 3 residues coordinate Zn(2+): Glu144, Glu168, and His354.

Belongs to the peptidase M20A family. ArgE subfamily. Homodimer. Requires Zn(2+) as cofactor. Co(2+) is required as a cofactor. The cofactor is glutathione.

It is found in the cytoplasm. The catalysed reaction is N(2)-acetyl-L-ornithine + H2O = L-ornithine + acetate. Its pathway is amino-acid biosynthesis; L-arginine biosynthesis; L-ornithine from N(2)-acetyl-L-ornithine (linear): step 1/1. Its function is as follows. Catalyzes the hydrolysis of the amide bond of N(2)-acetylated L-amino acids. Cleaves the acetyl group from N-acetyl-L-ornithine to form L-ornithine, an intermediate in L-arginine biosynthesis pathway, and a branchpoint in the synthesis of polyamines. In Buchnera aphidicola subsp. Schizaphis graminum (strain Sg), this protein is Acetylornithine deacetylase.